The following is a 142-amino-acid chain: 2-aminomuconate deaminase (142 aa).

It belongs to the 2-aminomuconate deaminase family. As to quaternary structure, homotetramer.

The catalysed reaction is (2Z,4E)-2-aminomuconate + H2O = (3E)-2-oxohex-3-enedioate + NH4(+). Slightly inhibited by Pb(2+), Hg(+) and Cu(2+). In terms of biological role, involved in the modified meta-cleavage pathway for the 2-aminophenol catabolism. Only active toward 2-aminomuconic acid. The polypeptide is 2-aminomuconate deaminase (amnD) (Pseudomonas sp).